The sequence spans 195 residues: MRGRDEETGEFHDKSRSQNRRDALDVLALGEKLVSLTPAQLARLPIPEDLLPHIAECKRITAHIAHKRQLAFLAKHMRREEEATLDAIRDALDANSETGRREVAMMHRVEDWRERLLAEGDKALAALLDDYPQADRQQLRTLVRNAQAEKAKNKPPRAYREIFQVLRALMLPAALGLKASAEDADPVESDEADED.

This sequence belongs to the DarP family.

It is found in the cytoplasm. Its function is as follows. Member of a network of 50S ribosomal subunit biogenesis factors which assembles along the 30S-50S interface, preventing incorrect 23S rRNA structures from forming. Promotes peptidyl transferase center (PTC) maturation. The chain is Dual-action ribosomal maturation protein DarP from Stenotrophomonas maltophilia (strain K279a).